We begin with the raw amino-acid sequence, 554 residues long: GPI transamidase component PIG-S homolog (554 aa).

Residues 1–73 are Cytoplasmic-facing; that stretch reads MSPCKWLTMF…LNKPEKSLKR (73 aa). A helical transmembrane segment spans residues 74-94; sequence YALLSFYVIILLAIPVWWKTT. Topologically, residues 95–511 are lumenal; that stretch reads HYERSSLPFE…VTTIYFPDES (417 aa). Residues Asn132 and Asn375 are each glycosylated (N-linked (GlcNAc...) asparagine). A helical membrane pass occupies residues 512–532; the sequence is KYGIYAPLFAPILIPLLISFI. At 533–554 the chain is on the cytoplasmic side; sequence KEVKDMLRERKLHRVANVPKPN.

The protein belongs to the PIGS family. As to quaternary structure, forms a complex with PIG-T homolog, PIG-U homolog and GPI8.

The protein localises to the endoplasmic reticulum membrane. The protein operates within glycolipid biosynthesis; glycosylphosphatidylinositol-anchor biosynthesis. Its function is as follows. Component of the GPI transamidase complex. Involved in transfer of GPI to proteins. The sequence is that of GPI transamidase component PIG-S homolog (gpi17) from Schizosaccharomyces pombe (strain 972 / ATCC 24843) (Fission yeast).